Here is a 332-residue protein sequence, read N- to C-terminus: Phosphate acyltransferase (332 aa).

It belongs to the PlsX family. Homodimer. Probably interacts with PlsY.

It localises to the cytoplasm. The catalysed reaction is a fatty acyl-[ACP] + phosphate = an acyl phosphate + holo-[ACP]. Its pathway is lipid metabolism; phospholipid metabolism. Its function is as follows. Catalyzes the reversible formation of acyl-phosphate (acyl-PO(4)) from acyl-[acyl-carrier-protein] (acyl-ACP). This enzyme utilizes acyl-ACP as fatty acyl donor, but not acyl-CoA. The polypeptide is Phosphate acyltransferase (Oceanobacillus iheyensis (strain DSM 14371 / CIP 107618 / JCM 11309 / KCTC 3954 / HTE831)).